Here is a 152-residue protein sequence, read N- to C-terminus: 3-dehydroquinate dehydratase (152 aa).

Catalysis depends on Y25, which acts as the Proton acceptor. Residues N76, H82, and D89 each coordinate substrate. The active-site Proton donor is the H102. Substrate-binding positions include 103–104 and R113; that span reads LS.

Belongs to the type-II 3-dehydroquinase family. Homododecamer.

It catalyses the reaction 3-dehydroquinate = 3-dehydroshikimate + H2O. The protein operates within metabolic intermediate biosynthesis; chorismate biosynthesis; chorismate from D-erythrose 4-phosphate and phosphoenolpyruvate: step 3/7. In terms of biological role, catalyzes a trans-dehydration via an enolate intermediate. In Gloeothece citriformis (strain PCC 7424) (Cyanothece sp. (strain PCC 7424)), this protein is 3-dehydroquinate dehydratase.